Reading from the N-terminus, the 227-residue chain is Ubiquitin domain-containing protein 1 (227 aa).

Positions 1-35 (MGNCVGRQRRERPAAPGHPRKRAGRNEPLKKERLK) are disordered. Over residues 24 to 35 (GRNEPLKKERLK) the composition is skewed to basic and acidic residues. The 76-residue stretch at 149–224 (FPLKVRLSTG…IQVIINQPPP (76 aa)) folds into the Ubiquitin-like domain.

As to quaternary structure, interacts with UBTD1.

Functionally, may be involved in the regulation of cellular senescence through a positive feedback loop with TP53. Is a TP53 downstream target gene that increases the stability of TP53 protein by promoting the ubiquitination and degradation of MDM2. In Homo sapiens (Human), this protein is Ubiquitin domain-containing protein 1 (UBTD1).